The sequence spans 295 residues: Alpha-ketoglutarate-dependent dioxygenase alkB homolog 3 (295 aa).

A disordered region spans residues M1 to Q48. Residues S22–S35 are compositionally biased toward low complexity. Substrate-binding positions include W115 and Y141–Y143. The region spanning T172–Y278 is the Fe2OG dioxygenase domain. Residue L177 is modified to (4R)-5-hydroxyleucine; alternate. At L177 the chain carries (4R)-5-oxoleucine; alternate. Residue N179–Y181 participates in 2-oxoglutarate binding. Residues H191 and D193 each contribute to the Fe cation site. D194 provides a ligand contact to substrate. H257 contacts Fe cation. 2-oxoglutarate is bound by residues R269 to R275 and R275.

Belongs to the alkB family. In terms of assembly, interacts with the ASCC complex composed of ASCC1, ASCC2 and ASCC3. Interacts directly with ASCC3, and is thereby recruited to the ASCC complex. Interacts with OTUD4; the interaction is direct. Interacts with USP7 and USP9X. Requires Fe(2+) as cofactor. Post-translationally, ubiquitinated; undergoes 'Lys-48'-linked polyubiquitination. OTUD4 promotes USP7 and USP9X-dependent deubiquitination of 'Lys-48'-polyubiquitinated ALKBH3 promoting the repair of alkylated DNA lesions.

It is found in the nucleus. The protein localises to the cytoplasm. The catalysed reaction is an N(1)-methyladenosine in mRNA + 2-oxoglutarate + O2 = an adenosine in mRNA + formaldehyde + succinate + CO2. It catalyses the reaction a methylated nucleobase within DNA + 2-oxoglutarate + O2 = a nucleobase within DNA + formaldehyde + succinate + CO2. It carries out the reaction an N(1)-methyl-2'-deoxyadenosine in single-stranded DNA + 2-oxoglutarate + O2 = a 2'-deoxyadenosine in single-stranded DNA + formaldehyde + succinate + CO2 + H(+). The enzyme catalyses an N(3)-methyl-2'-deoxycytidine in single-stranded DNA + 2-oxoglutarate + O2 = a 2'-deoxycytidine in single-stranded DNA + formaldehyde + succinate + CO2 + H(+). The catalysed reaction is a 3,N(4)-etheno-2'-deoxycytidine in single-stranded DNA + 2-oxoglutarate + O2 + H2O = a 2'-deoxycytidine in single-stranded DNA + glyoxal + succinate + CO2. Activated by ascorbate. Its function is as follows. Dioxygenase that mediates demethylation of DNA and RNA containing 1-methyladenosine (m1A). Repairs alkylated DNA containing 1-methyladenosine (m1A) and 3-methylcytosine (m3C) by oxidative demethylation. Has a strong preference for single-stranded DNA. Able to process alkylated m3C within double-stranded regions via its interaction with ASCC3, which promotes DNA unwinding to generate single-stranded substrate needed for ALKBH3. Can repair exocyclic 3,N4-ethenocytosine adducs in single-stranded DNA. Also acts on RNA. Demethylates N(1)-methyladenosine (m1A) RNA, an epigenetic internal modification of messenger RNAs (mRNAs) highly enriched within 5'-untranslated regions (UTRs) and in the vicinity of start codons. Requires molecular oxygen, alpha-ketoglutarate and iron. This is Alpha-ketoglutarate-dependent dioxygenase alkB homolog 3 from Rattus norvegicus (Rat).